A 337-amino-acid polypeptide reads, in one-letter code: Fructose-1,6-bisphosphatase class 1 (337 aa).

Glu-94, Asp-116, Leu-118, and Asp-119 together coordinate Mg(2+). Residues 119 to 122, Asn-210, and Lys-276 each bind substrate; that span reads DGSS. Residue Glu-282 coordinates Mg(2+).

It belongs to the FBPase class 1 family. As to quaternary structure, homotetramer. Mg(2+) serves as cofactor.

The protein localises to the cytoplasm. It carries out the reaction beta-D-fructose 1,6-bisphosphate + H2O = beta-D-fructose 6-phosphate + phosphate. It participates in carbohydrate biosynthesis; gluconeogenesis. This Burkholderia vietnamiensis (strain G4 / LMG 22486) (Burkholderia cepacia (strain R1808)) protein is Fructose-1,6-bisphosphatase class 1.